The sequence spans 45 residues: Monellin chain A (45 aa).

As to quaternary structure, heterodimer of an A chain and a B chain.

Functionally, taste-modifying protein; intensely sweet-tasting protein. This chain is Monellin chain A, found in Dioscoreophyllum cumminsii (Serendipity berry).